We begin with the raw amino-acid sequence, 369 residues long: Protein HGH1 homolog (369 aa).

Belongs to the HGH1 family.

In Drosophila melanogaster (Fruit fly), this protein is Protein HGH1 homolog.